Here is a 188-residue protein sequence, read N- to C-terminus: Probable nicotinate-nucleotide adenylyltransferase (188 aa).

Belongs to the NadD family.

The enzyme catalyses nicotinate beta-D-ribonucleotide + ATP + H(+) = deamido-NAD(+) + diphosphate. It functions in the pathway cofactor biosynthesis; NAD(+) biosynthesis; deamido-NAD(+) from nicotinate D-ribonucleotide: step 1/1. Catalyzes the reversible adenylation of nicotinate mononucleotide (NaMN) to nicotinic acid adenine dinucleotide (NaAD). The protein is Probable nicotinate-nucleotide adenylyltransferase of Acholeplasma laidlawii (strain PG-8A).